The following is a 189-amino-acid chain: UPF0301 protein Plut_0637 (189 aa).

It belongs to the UPF0301 (AlgH) family.

The polypeptide is UPF0301 protein Plut_0637 (Chlorobium luteolum (strain DSM 273 / BCRC 81028 / 2530) (Pelodictyon luteolum)).